A 464-amino-acid chain; its full sequence is uncharacterized protein (464 aa).

Residues 1–24 form the signal peptide; that stretch reads MSRFVPRIIPFYLLLLVAGGTANA.

The protein belongs to the intimin/invasin family.

The protein localises to the periplasm. This is an uncharacterized protein from Escherichia coli (strain K12).